Here is a 90-residue protein sequence, read N- to C-terminus: RNA-binding protein Hfq (90 aa).

The Sm domain occupies 9 to 68 (DPFLNALRRERVPVSIYLVNGIKLQGQVESFDQFVILLKNTVSQMVYKHAISTVVPARPF).

Belongs to the Hfq family. In terms of assembly, homohexamer.

Its function is as follows. RNA chaperone that binds small regulatory RNA (sRNAs) and mRNAs to facilitate mRNA translational regulation in response to envelope stress, environmental stress and changes in metabolite concentrations. Also binds with high specificity to tRNAs. This is RNA-binding protein Hfq from Shewanella oneidensis (strain ATCC 700550 / JCM 31522 / CIP 106686 / LMG 19005 / NCIMB 14063 / MR-1).